We begin with the raw amino-acid sequence, 172 residues long: NADH-quinone oxidoreductase subunit B (172 aa).

[4Fe-4S] cluster-binding residues include Cys-46, Cys-47, Cys-111, and Cys-141.

Belongs to the complex I 20 kDa subunit family. As to quaternary structure, NDH-1 is composed of 14 different subunits. Subunits NuoB, C, D, E, F, and G constitute the peripheral sector of the complex. [4Fe-4S] cluster is required as a cofactor.

It is found in the cell membrane. The enzyme catalyses a quinone + NADH + 5 H(+)(in) = a quinol + NAD(+) + 4 H(+)(out). In terms of biological role, NDH-1 shuttles electrons from NADH, via FMN and iron-sulfur (Fe-S) centers, to quinones in the respiratory chain. The immediate electron acceptor for the enzyme in this species is believed to be a menaquinone. Couples the redox reaction to proton translocation (for every two electrons transferred, four hydrogen ions are translocated across the cytoplasmic membrane), and thus conserves the redox energy in a proton gradient. In Bacillus cereus (strain G9842), this protein is NADH-quinone oxidoreductase subunit B.